A 343-amino-acid polypeptide reads, in one-letter code: Diterpene cyclase DtcycB (343 aa).

Residues asparagine 219, serine 223, and glutamate 227 each coordinate Mg(2+).

It belongs to the terpene synthase family. Homodimer. Mg(2+) is required as a cofactor.

It catalyses the reaction (2E,6E,10E)-geranylgeranyl diphosphate + H2O = (R)-nephthenol + diphosphate. The catalysed reaction is (2E,6E,10E)-geranylgeranyl diphosphate = (R)-cembrene A + diphosphate. It carries out the reaction (2E,6E,10E)-geranylgeranyl diphosphate + H2O = (1S,4E,8E,12E)-2,2,5,9,13-pentamethylcyclopentadeca-4,8,12-trien-1-ol + diphosphate. Functionally, diterpene cyclases that can form multiple diterpene products. This Streptomyces sp protein is Diterpene cyclase DtcycB.